A 248-amino-acid chain; its full sequence is Granulin (248 aa).

The protein belongs to the polyhedrin family.

Functionally, component of the virus occlusion bodies, which are large proteinaceous structures, that protect the virus from the outside environment for extended periods until they are ingested by insect larvae. The chain is Granulin from Zygaenidae (burnets).